We begin with the raw amino-acid sequence, 214 residues long: Membrane antigen containing repeating peptides (214 aa).

Tandem repeats lie at residues 1-14 (QETS…EETL), 15-28 (QETS…EETL), 29-42 (QETS…EETL), and 43-56 (QETS…EETL). The tract at residues 1 to 31 (QETSAKLADTEETLQETSAKLADTEETLQET) is disordered. The segment at 1–56 (QETSAKLADTEETLQETSAKLADTEETLQETSAKLADTEETLQETSAKLADTEETL) is 4 X 14 AA tandem repeats. Positions 180–214 (CSLHPTPRRLGDVSNRENSIENKTRSASRLSGRLF) are disordered. The segment covering 188 to 203 (RLGDVSNRENSIENKT) has biased composition (basic and acidic residues).

It is found in the membrane. The polypeptide is Membrane antigen containing repeating peptides (Leishmania major).